The following is a 181-amino-acid chain: Alkyl hydroperoxide reductase AhpD (181 aa).

Cysteine 130 serves as the catalytic Proton donor. A disulfide bridge connects residues cysteine 130 and cysteine 133. The active-site Cysteine sulfenic acid (-SOH) intermediate is the cysteine 133.

The protein belongs to the AhpD family.

The enzyme catalyses N(6)-[(R)-dihydrolipoyl]-L-lysyl-[lipoyl-carrier protein] + a hydroperoxide = N(6)-[(R)-lipoyl]-L-lysyl-[lipoyl-carrier protein] + an alcohol + H2O. Functionally, antioxidant protein with alkyl hydroperoxidase activity. Required for the reduction of the AhpC active site cysteine residues and for the regeneration of the AhpC enzyme activity. This Gluconacetobacter diazotrophicus (strain ATCC 49037 / DSM 5601 / CCUG 37298 / CIP 103539 / LMG 7603 / PAl5) protein is Alkyl hydroperoxide reductase AhpD.